A 297-amino-acid chain; its full sequence is Adrenocorticotropic hormone receptor (297 aa).

Over 1–23 (MKHITDLYESVNSTMSNKSDCPP) the chain is Extracellular. N-linked (GlcNAc...) asparagine glycosylation is found at asparagine 12 and asparagine 17. 2 disulfide bridges follow: cysteine 21–cysteine 253 and cysteine 245–cysteine 251. Residues 24-49 (VVLPEEVFFTISVIGVLENLIVLLAV) form a helical membrane-spanning segment. Residues 50–58 (IKNKNLQSP) are Cytoplasmic-facing. A helical membrane pass occupies residues 59–79 (MYFFICSLAISDMLGSLYKIL). Residues 80 to 104 (ENILIIFRNMGYLEPRGGFESTADD) are Extracellular-facing. Residues 105 to 126 (VVDSLFILSLLGSICSLSAIAA) form a helical membrane-spanning segment. Over 127 to 147 (DRYITIFHALQYQRLVTPRRA) the chain is Cytoplasmic. The helical transmembrane segment at 148–168 (AVVLLIIWACCIGSGITIVTF) threads the bilayer. At 169–180 (SHHVPAVIAFTA) the chain is on the extracellular side. The helical transmembrane segment at 181–199 (LFPLMLVFILCLYGHMFLL) threads the bilayer. Residues 200–217 (ARSHARRVSTLPRANMKG) lie on the Cytoplasmic side of the membrane. Residues 218 to 244 (AITLTVLLGVFIFCWAPFVLHILLMTF) traverse the membrane as a helical segment. Over 245–256 (CPADPYCACYLA) the chain is Extracellular. A helical membrane pass occupies residues 257 to 278 (LFQVNAVLIMCNAIIDPFIYAF). Residues 279–297 (RSPELRDAFKKMIICKRYP) are Cytoplasmic-facing. Residue cysteine 293 is the site of S-palmitoyl cysteine attachment.

It belongs to the G-protein coupled receptor 1 family. In terms of assembly, homodimer. Interacts with corticotropin (ACTH). Interacts with MRAP; this interaction targets MC2R to the plasma membrane. Interacts with MRAP2; competing with MRAP for binding to MC2R and impairing the binding of corticotropin (ACTH). In terms of processing, ubiquitinated by MGRN1 that may be involved in post-endocytic trafficking and/or degradation of internalized receptor. As to expression, expressed in skin and adrenal gland tissues.

It localises to the cell membrane. In terms of biological role, hormone receptor primarily expressed in adrenal cortex that plays a key role in regulating adrenocortical function. Upon corticotropin (ACTH) binding, facilitates the release of adrenal glucocorticoids, including cortisol and corticosterone. In addition, MC2R is required for fetal and neonatal adrenal gland development. Mechanistically, activates adenylate cyclase (cAMP), the MAPK cascade as well as the cAMP-dependent protein kinase A pathway leading to steroidogenic factor 1/NR5A1-mediated transcriptional activation. This is Adrenocorticotropic hormone receptor (MC2R) from Sus scrofa (Pig).